The primary structure comprises 367 residues: Homeobox protein Nkx-6.1 (367 aa).

The tract at residues 36–133 (YPAAYPPLPA…SSSSSSSASA (98 aa)) is disordered. 3 stretches are compositionally biased toward low complexity: residues 48–59 (PSSSSSSSSSSS), 78–91 (GGLS…QQLS), and 110–133 (ASGA…SASA). Residues 102–268 (LSRPSMPVAS…KYLAGPERAR (167 aa)) form a repressor domain region. At R189 the chain carries Asymmetric dimethylarginine. Positions 236–295 (RKHTRPTFSGQQIFALEKTFEQTKYLAGPERARLAYSLGMTESQVKVWFQNRRTKWRKKH) form a DNA-binding region, homeobox. Positions 294-367 (KHAAEMATAK…LHASEPESSS (74 aa)) are disordered. Basic and acidic residues predominate over residues 304 to 317 (KKQDSETERLKGAS). Residues 306–367 (QDSETERLKG…LHASEPESSS (62 aa)) form an involved in DNA-binding region.

In terms of tissue distribution, pancreatic beta cells.

Its subcellular location is the nucleus. Transcription factor which binds to specific A/T-rich DNA sequences in the promoter regions of a number of genes. Involved in the development of insulin-producing beta cells in the islets of Langerhans at the secondary transition. Together with NKX2-2 and IRX3 acts to restrict the generation of motor neurons to the appropriate region of the neural tube. Belongs to the class II proteins of neuronal progenitor factors, which are induced by SHH signals. This is Homeobox protein Nkx-6.1 (NKX6-1) from Homo sapiens (Human).